The primary structure comprises 163 residues: Nucleotide-binding protein KPN78578_03700 (163 aa).

It belongs to the YajQ family.

In terms of biological role, nucleotide-binding protein. In Klebsiella pneumoniae subsp. pneumoniae (strain ATCC 700721 / MGH 78578), this protein is Nucleotide-binding protein KPN78578_03700.